The chain runs to 493 residues: Aluminum-activated malate transporter 1 (493 aa).

A run of 5 helical transmembrane segments spans residues 28–48 (VGLA…GPFT), 51–71 (FGIN…FSVG), 104–124 (TVEP…STFV), 133–153 (KFDY…LSGF), and 169–189 (VVIG…VWAG). Phosphoserine is present on residues Ser-320 and Ser-327. Thr-385 is subject to Phosphothreonine. Residues 441–452 (DNDRSNNVDDSR) show a composition bias toward basic and acidic residues. The interval 441–460 (DNDRSNNVDDSRGGSSQDSC) is disordered.

This sequence belongs to the aromatic acid exporter (TC 2.A.85) family. Post-translationally, phosphorylated. A reversible phosphorylation is required for activation. As to expression, expressed in roots, but not in shoots. Detected in the root apex in absence of aluminum stress and in root apices, the stele and endodermis of the elongating zone of primary and lateral roots after aluminum stress. Not expressed in cortical and epidermal cells.

It is found in the cell membrane. Activated by external aluminum. Functionally, malate transporter critical for aluminum tolerance. The STOP1 transcription factor is required for ALMT1 expression. The polypeptide is Aluminum-activated malate transporter 1 (ALMT1) (Arabidopsis thaliana (Mouse-ear cress)).